The chain runs to 194 residues: RNA polymerase II subunit A C-terminal domain phosphatase SSU72 like protein 1 (194 aa).

Belongs to the SSU72 phosphatase family.

It localises to the nucleus. The enzyme catalyses O-phospho-L-seryl-[protein] + H2O = L-seryl-[protein] + phosphate. It carries out the reaction O-phospho-L-threonyl-[protein] + H2O = L-threonyl-[protein] + phosphate. In terms of biological role, protein phosphatase that catalyzes the dephosphorylation of the C-terminal domain of RNA polymerase II. Plays a role in RNA processing and termination. The polypeptide is RNA polymerase II subunit A C-terminal domain phosphatase SSU72 like protein 1 (Homo sapiens (Human)).